Reading from the N-terminus, the 107-residue chain is uncharacterized protein (107 aa).

The 102-residue stretch at 6–107 folds into the Glutaredoxin domain; it reads KARIDQLVTA…QEMLEVALAS (102 aa). Lys23 serves as a coordination point for glutathione. Cys31 is a binding site for [2Fe-2S] cluster. Glutathione is bound by residues Arg60 and 85 to 86; that span reads SD.

This sequence belongs to the glutaredoxin family. Monothiol subfamily.

This is an uncharacterized protein from Synechocystis sp. (strain ATCC 27184 / PCC 6803 / Kazusa).